A 381-amino-acid polypeptide reads, in one-letter code: Homoserine O-succinyltransferase (381 aa).

An AB hydrolase-1 domain is found at 45–360 (NAVLVCHALN…PHGHDAFLLD (316 aa)). The active-site Nucleophile is the Ser151. Arg221 contacts substrate. Active-site residues include Asp321 and His354. Substrate is bound at residue Asp355.

The protein belongs to the AB hydrolase superfamily. MetX family. In terms of assembly, homodimer.

It localises to the cytoplasm. The enzyme catalyses L-homoserine + succinyl-CoA = O-succinyl-L-homoserine + CoA. It participates in amino-acid biosynthesis; L-methionine biosynthesis via de novo pathway; O-succinyl-L-homoserine from L-homoserine: step 1/1. Its function is as follows. Transfers a succinyl group from succinyl-CoA to L-homoserine, forming succinyl-L-homoserine. The protein is Homoserine O-succinyltransferase of Paraburkholderia phymatum (strain DSM 17167 / CIP 108236 / LMG 21445 / STM815) (Burkholderia phymatum).